Consider the following 248-residue polypeptide: MFKDGSLIPYLTAGDPDKQSTLNFLLALDEYAGAIELGIPFSDPIADGKTIQESHYRALKNGFKLREAFWIVKEFRRHSSTPIVLMTYYNPIYRAGVRNFLAEAKASGVDGILVVDLPVFHAKEFTEIAREEGIKTVFLAAPNTPDERLKVIDDMTTGFVYLVSLYGTTGAREEIPKTAYDLLRRAKRICRNKVAVGFGVSKREHVVSLLKEGANGVVVGSALVKIIGEKGREATEFLKKKVEELLGI.

Residues glutamate 36 and aspartate 47 each act as proton acceptor in the active site.

This sequence belongs to the TrpA family. In terms of assembly, tetramer of two alpha and two beta chains.

It catalyses the reaction (1S,2R)-1-C-(indol-3-yl)glycerol 3-phosphate + L-serine = D-glyceraldehyde 3-phosphate + L-tryptophan + H2O. The protein operates within amino-acid biosynthesis; L-tryptophan biosynthesis; L-tryptophan from chorismate: step 5/5. Its function is as follows. The alpha subunit is responsible for the aldol cleavage of indoleglycerol phosphate to indole and glyceraldehyde 3-phosphate. The protein is Tryptophan synthase alpha chain of Pyrococcus furiosus (strain ATCC 43587 / DSM 3638 / JCM 8422 / Vc1).